We begin with the raw amino-acid sequence, 129 residues long: Selenoprotein M (129 aa).

An N-terminal signal peptide occupies residues 1–19 (MARGLAVFFLLAGACLALA). Active-site nucleophile residues include Cys35 and Sec38. Residue Sec38 is a non-standard amino acid, selenocysteine. Residues 107 to 129 (KSSKDEQVPEEYQEGPYMEKEEL) are disordered. The Prevents secretion from ER motif lies at 126-129 (KEEL).

This sequence belongs to the selenoprotein M/F family. As to expression, high expression levels observed in hepatopancreas, testis, ovaries and intestine. Also expressed in heart, stomach, gills, cranial ganglia, muscle and hematocytes.

Its subcellular location is the endoplasmic reticulum. Its function is as follows. May function as a thiol-disulfide oxidoreductase that participates in disulfide bond formation. Involved in the regulation of reproduction during the period of rapid gonadal development. In Eriocheir sinensis (Chinese mitten crab), this protein is Selenoprotein M.